A 390-amino-acid chain; its full sequence is Galactokinase (390 aa).

Glu-34–Asp-37 is a substrate binding site. ATP is bound by residues Ser-68 and Gly-122–Ser-128. 2 residues coordinate Mg(2+): Ser-128 and Glu-160. The active-site Proton acceptor is the Asp-172. Residue Tyr-221 participates in substrate binding.

Belongs to the GHMP kinase family. GalK subfamily.

The protein localises to the cytoplasm. The enzyme catalyses alpha-D-galactose + ATP = alpha-D-galactose 1-phosphate + ADP + H(+). Its pathway is carbohydrate metabolism; galactose metabolism. Its function is as follows. Catalyzes the transfer of the gamma-phosphate of ATP to D-galactose to form alpha-D-galactose-1-phosphate (Gal-1-P). In Chloroflexus aggregans (strain MD-66 / DSM 9485), this protein is Galactokinase.